The sequence spans 445 residues: Trigger factor (445 aa).

Residues 162 to 247 enclose the PPIase FKBP-type domain; that stretch reads GDQVTIDAIG…IKAVHTAEPT (86 aa).

The protein belongs to the FKBP-type PPIase family. Tig subfamily.

Its subcellular location is the cytoplasm. The catalysed reaction is [protein]-peptidylproline (omega=180) = [protein]-peptidylproline (omega=0). In terms of biological role, involved in protein export. Acts as a chaperone by maintaining the newly synthesized protein in an open conformation. Functions as a peptidyl-prolyl cis-trans isomerase. In Rickettsia peacockii (strain Rustic), this protein is Trigger factor.